The primary structure comprises 230 residues: RING finger protein 141 (230 aa).

The N-myristoyl glycine moiety is linked to residue G2. The RING-type zinc finger occupies 155–192 (CCICMDGRADLILPCAHSFCQKCIDKWSDRHRNCPICR).

It localises to the membrane. Functionally, may be involved in spermatogenesis. The sequence is that of RING finger protein 141 (RNF141) from Pongo abelii (Sumatran orangutan).